Here is a 206-residue protein sequence, read N- to C-terminus: Large ribosomal subunit protein uL4 (206 aa).

Residues 51 to 96 (LTRAEVKHSTKKPFRQKGTGNARAGMTSTPNRRGGGRAFPNKPDEN) are disordered.

It belongs to the universal ribosomal protein uL4 family. As to quaternary structure, part of the 50S ribosomal subunit.

Functionally, one of the primary rRNA binding proteins, this protein initially binds near the 5'-end of the 23S rRNA. It is important during the early stages of 50S assembly. It makes multiple contacts with different domains of the 23S rRNA in the assembled 50S subunit and ribosome. In terms of biological role, forms part of the polypeptide exit tunnel. The polypeptide is Large ribosomal subunit protein uL4 (Chromobacterium violaceum (strain ATCC 12472 / DSM 30191 / JCM 1249 / CCUG 213 / NBRC 12614 / NCIMB 9131 / NCTC 9757 / MK)).